Consider the following 82-residue polypeptide: Musculoskeletal embryonic nuclear protein 1 (82 aa).

Disordered stretches follow at residues 1–33 and 49–82; these read MSQA…LTKN and QAGS…SVFG. Residue Ser2 is modified to Phosphoserine. The Nuclear localization signal motif lies at 10–18; that stretch reads PIKKKRPPV.

It belongs to the MUSTN1 family. In terms of tissue distribution, expression in skeletal muscle is reduced during limb unloading but increases during the active recovery phase that follows.

It is found in the nucleus. The protein resides in the cytoplasm. Its subcellular location is the secreted. The protein localises to the extracellular space. Required for chondrocyte development and proliferation. Plays a role in myoblast differentiation and fusion. Modulates skeletal muscle extracellular matrix composition. Plays a role in skeletal muscle function. Plays a role in glucose homeostasis. The polypeptide is Musculoskeletal embryonic nuclear protein 1 (MUSTN1) (Homo sapiens (Human)).